The following is a 134-amino-acid chain: 6,7-dimethyl-8-ribityllumazine synthase (134 aa).

5-amino-6-(D-ribitylamino)uracil-binding positions include phenylalanine 12, valine 44 to aspartate 46, and serine 68 to isoleucine 70. (2S)-2-hydroxy-3-oxobutyl phosphate is bound at residue aspartate 73–threonine 74. Histidine 76 (proton donor) is an active-site residue. Leucine 101 lines the 5-amino-6-(D-ribitylamino)uracil pocket. A (2S)-2-hydroxy-3-oxobutyl phosphate-binding site is contributed by arginine 116.

This sequence belongs to the DMRL synthase family.

It catalyses the reaction (2S)-2-hydroxy-3-oxobutyl phosphate + 5-amino-6-(D-ribitylamino)uracil = 6,7-dimethyl-8-(1-D-ribityl)lumazine + phosphate + 2 H2O + H(+). Its pathway is cofactor biosynthesis; riboflavin biosynthesis; riboflavin from 2-hydroxy-3-oxobutyl phosphate and 5-amino-6-(D-ribitylamino)uracil: step 1/2. Its function is as follows. Catalyzes the formation of 6,7-dimethyl-8-ribityllumazine by condensation of 5-amino-6-(D-ribitylamino)uracil with 3,4-dihydroxy-2-butanone 4-phosphate. This is the penultimate step in the biosynthesis of riboflavin. The polypeptide is 6,7-dimethyl-8-ribityllumazine synthase (Methanosarcina barkeri (strain Fusaro / DSM 804)).